Reading from the N-terminus, the 223-residue chain is Ribonuclease 3 (223 aa).

The 124-residue stretch at 4-127 (LNRLEEHLGY…LMGAIYLESG (124 aa)) folds into the RNase III domain. E40 is a Mg(2+) binding site. The active site involves D44. The Mg(2+) site is built by D113 and E116. The active site involves E116. One can recognise a DRBM domain in the interval 154-223 (DYKTTLQEIT…AWKVLQGMNI (70 aa)).

This sequence belongs to the ribonuclease III family. As to quaternary structure, homodimer. It depends on Mg(2+) as a cofactor.

The protein localises to the cytoplasm. The catalysed reaction is Endonucleolytic cleavage to 5'-phosphomonoester.. Digests double-stranded RNA. Involved in the processing of primary rRNA transcript to yield the immediate precursors to the large and small rRNAs (23S and 16S). Processes some mRNAs, and tRNAs when they are encoded in the rRNA operon. Processes pre-crRNA and tracrRNA of type II CRISPR loci if present in the organism. The polypeptide is Ribonuclease 3 (Campylobacter fetus subsp. fetus (strain 82-40)).